The chain runs to 2118 residues: Separin (2118 aa).

Residue Ser1121 is modified to Phosphoserine. A compositionally biased stretch (basic residues) spans Lys1309 to Ile1318. The segment at Lys1309–Gly1352 is disordered. A phosphoserine mark is found at Ser1391 and Ser1394. The tract at residues Glu1408–Ser1428 is disordered. Phosphoserine is present on Ser1504. A Peptidase C50 domain is found at Pro1941–Leu2036. Cys2025 is a catalytic residue.

As to quaternary structure, interacts with PTTG1. Interacts with RAD21. Autocleaves. This function, which is not essential for its protease activity, is unknown. Post-translationally, phosphorylated by CDK1. There is 8 Ser/Thr phosphorylation sites. Among them, only Ser-1121 phosphorylation is the major site, which conducts to the enzyme inactivation.

It localises to the cytoplasm. It is found in the nucleus. The catalysed reaction is All bonds known to be hydrolyzed by this endopeptidase have arginine in P1 and an acidic residue in P4. P6 is often occupied by an acidic residue or by a hydroxy-amino-acid residue, the phosphorylation of which enhances cleavage.. Regulated by at least two independent mechanisms. First, it is inactivated via its interaction with securin/PTTG1, which probably covers its active site. The association with PTTG1 is not only inhibitory, since PTTG1 is also required for activating it, the enzyme being inactive in cells in which PTTG1 is absent. PTTG1 degradation at anaphase, liberates it and triggers RAD21 cleavage. Second, phosphorylation at Ser-1121 inactivates it. The complete phosphorylation during mitosis, is removed when cells undergo anaphase. Activation of the enzyme at the metaphase-anaphase transition probably requires the removal of both securin and inhibitory phosphate. Functionally, caspase-like protease, which plays a central role in the chromosome segregation by cleaving the SCC1/RAD21 subunit of the cohesin complex at the onset of anaphase. During most of the cell cycle, it is inactivated by different mechanisms. This is Separin (Espl1) from Mus musculus (Mouse).